Consider the following 82-residue polypeptide: MPKRILEGVVVSDKGDKTVVVKVERTFLHPVLKKTVRRSKKYHAHDEANTYKVGEVARIIECAPKSKLKTWEVLPKGGAAQA.

The protein belongs to the universal ribosomal protein uS17 family. As to quaternary structure, part of the 30S ribosomal subunit.

In terms of biological role, one of the primary rRNA binding proteins, it binds specifically to the 5'-end of 16S ribosomal RNA. The polypeptide is Small ribosomal subunit protein uS17 (Phenylobacterium zucineum (strain HLK1)).